The sequence spans 482 residues: Chromosome stability protein 9 (482 aa).

Disordered stretches follow at residues 239 to 263 (SSLRNSSKNNNGTVTPSTSGRVNKN) and 418 to 482 (SGLA…RRIR). Residues 240-249 (SLRNSSKNNN) are compositionally biased toward low complexity. Over residues 250 to 263 (GTVTPSTSGRVNKN) the composition is skewed to polar residues. The span at 418-437 (SGLAFSSSSNSLQQSKLPKS) shows a compositional bias: low complexity. Polar residues-rich tracts occupy residues 440–453 (LKRSNSTQQLTNTH) and 463–473 (RSSNTVLGSSK).

In terms of assembly, component of the synapsis initiation complex composed of at least ZIP2, ZIP3, MSH4 and MSH5. Also interacts with ZIP1, MRE11, RAD51 and RAD53.

It is found in the nucleus. It localises to the chromosome. Functionally, component of the synapsis initiation complex (SIC) necessary for the synaptonemal complex assembly. Stabilizes the ZIP2 component to the chromosomes. The SIC complex loads onto chromosomes and nucleates ZIP1 polymerization, a molecular zipper that acts to bring homologous chromosomes in close apposition, which is required for meiotic crossover. May also be involved in double strand break repair. The polypeptide is Chromosome stability protein 9 (CST9) (Saccharomyces cerevisiae (strain ATCC 204508 / S288c) (Baker's yeast)).